The chain runs to 177 residues: Ribosome maturation factor RimM (177 aa).

The 82-residue stretch at 96–177 (DNEFYWVDLI…KITVDWGLDY (82 aa)) folds into the PRC barrel domain.

The protein belongs to the RimM family. As to quaternary structure, binds ribosomal protein uS19.

The protein localises to the cytoplasm. In terms of biological role, an accessory protein needed during the final step in the assembly of 30S ribosomal subunit, possibly for assembly of the head region. Essential for efficient processing of 16S rRNA. May be needed both before and after RbfA during the maturation of 16S rRNA. It has affinity for free ribosomal 30S subunits but not for 70S ribosomes. In Herminiimonas arsenicoxydans, this protein is Ribosome maturation factor RimM.